A 116-amino-acid polypeptide reads, in one-letter code: Small ribosomal subunit protein uS8c (116 aa).

The protein belongs to the universal ribosomal protein uS8 family. Part of the 30S ribosomal subunit.

The protein localises to the plastid. It is found in the chloroplast. Its function is as follows. One of the primary rRNA binding proteins, it binds directly to 16S rRNA central domain where it helps coordinate assembly of the platform of the 30S subunit. In Musa acuminata (Banana), this protein is Small ribosomal subunit protein uS8c (rps8).